Reading from the N-terminus, the 245-residue chain is 4-hydroxy-tetrahydrodipicolinate reductase (245 aa).

Residues 7–12 (GARGKV), 75–77 (GTT), and 102–105 (APNF) contribute to the NAD(+) site. His132 serves as the catalytic Proton donor/acceptor. His133 is a binding site for (S)-2,3,4,5-tetrahydrodipicolinate. Lys136 acts as the Proton donor in catalysis. (S)-2,3,4,5-tetrahydrodipicolinate is bound at residue 142-143 (GT).

This sequence belongs to the DapB family.

Its subcellular location is the cytoplasm. The catalysed reaction is (S)-2,3,4,5-tetrahydrodipicolinate + NAD(+) + H2O = (2S,4S)-4-hydroxy-2,3,4,5-tetrahydrodipicolinate + NADH + H(+). It carries out the reaction (S)-2,3,4,5-tetrahydrodipicolinate + NADP(+) + H2O = (2S,4S)-4-hydroxy-2,3,4,5-tetrahydrodipicolinate + NADPH + H(+). Its pathway is amino-acid biosynthesis; L-lysine biosynthesis via DAP pathway; (S)-tetrahydrodipicolinate from L-aspartate: step 4/4. Its function is as follows. Catalyzes the conversion of 4-hydroxy-tetrahydrodipicolinate (HTPA) to tetrahydrodipicolinate. The chain is 4-hydroxy-tetrahydrodipicolinate reductase from Mycolicibacterium smegmatis (strain ATCC 700084 / mc(2)155) (Mycobacterium smegmatis).